The following is a 226-amino-acid chain: Ribonuclease HII (226 aa).

Positions 29–220 (GPVAGVDEAG…VVAAGVRLEQ (192 aa)) constitute an RNase H type-2 domain. The a divalent metal cation site is built by Asp35, Glu36, and Asp129.

It belongs to the RNase HII family. It depends on Mn(2+) as a cofactor. Mg(2+) is required as a cofactor.

The protein localises to the cytoplasm. The catalysed reaction is Endonucleolytic cleavage to 5'-phosphomonoester.. In terms of biological role, endonuclease that specifically degrades the RNA of RNA-DNA hybrids. This chain is Ribonuclease HII, found in Rhodococcus erythropolis (strain PR4 / NBRC 100887).